Consider the following 487-residue polypeptide: uncharacterized protein (487 aa).

ABC transporter domains lie at 5 to 249 (VKFA…IPVK) and 265 to 487 (ISME…VIHA). An ATP-binding site is contributed by 297 to 304 (GSNGSGKT).

This sequence belongs to the ABC transporter superfamily.

The protein resides in the mitochondrion. This is an uncharacterized protein from Schizosaccharomyces pombe (strain 972 / ATCC 24843) (Fission yeast).